Here is a 241-residue protein sequence, read N- to C-terminus: NAD-dependent protein deacetylase 2 (241 aa).

In terms of domain architecture, Deacetylase sirtuin-type spans 1-241; that stretch reads MTGKPLVAIL…ALPALLRGLG (241 aa). A13, T17, R25, Q92, V94, D95, and H112 together coordinate NAD(+). Nicotinamide-binding residues include V94 and D95. The active-site Proton acceptor is the H112. Residues C120, C123, C145, and C148 each coordinate Zn(2+). NAD(+)-binding residues include T186, S187, N211, and I229.

This sequence belongs to the sirtuin family. Class U subfamily. The cofactor is Zn(2+).

The protein resides in the cytoplasm. It catalyses the reaction N(6)-acetyl-L-lysyl-[protein] + NAD(+) + H2O = 2''-O-acetyl-ADP-D-ribose + nicotinamide + L-lysyl-[protein]. Its function is as follows. NAD-dependent protein deacetylase which modulates the activities of several enzymes which are inactive in their acetylated form. The chain is NAD-dependent protein deacetylase 2 from Streptomyces coelicolor (strain ATCC BAA-471 / A3(2) / M145).